The chain runs to 283 residues: Release factor glutamine methyltransferase (283 aa).

S-adenosyl-L-methionine is bound by residues 120–124 (GTGSG), aspartate 143, phenylalanine 172, and asparagine 187. 187 to 190 (NPPY) serves as a coordination point for substrate.

This sequence belongs to the protein N5-glutamine methyltransferase family. PrmC subfamily.

The catalysed reaction is L-glutaminyl-[peptide chain release factor] + S-adenosyl-L-methionine = N(5)-methyl-L-glutaminyl-[peptide chain release factor] + S-adenosyl-L-homocysteine + H(+). In terms of biological role, methylates the class 1 translation termination release factors RF1/PrfA and RF2/PrfB on the glutamine residue of the universally conserved GGQ motif. The polypeptide is Release factor glutamine methyltransferase (Moorella thermoacetica (strain ATCC 39073 / JCM 9320)).